Here is a 356-residue protein sequence, read N- to C-terminus: MKRELLLEKIEEYKSLMPWFVLEYYQSKLSVPYSFTTLYEYLKEYKRFFNWLIDSGISDADDIASIHIKTLENLTKKDMESFVLYLRERPSLNTYSKKQGVSQTTINRTLSALSCLYKYLTEEVEGPDGEPYFYRNVMKKISTKKKKETLAARAENIKQKLFLGDETMKFLDYVENEYEVKLSNRAKSSFYKNKERDLAIIALLLSSGVRLSEAVNLDLKDINLKRMVIDVTRKGGQRDSVNMASFARPYLENYLSIRNKRYKAEKQDVALFLTEYRGVPNRIDASSIEKMVAKYSQDFKIRVTPHKLRHTLATRLYDATKSQVLVSHQLGHASTQVTDLYTHIVNDEQKNALDNL.

The 106-residue stretch at 16-121 (LMPWFVLEYY…ALSCLYKYLT (106 aa)) folds into the Core-binding (CB) domain. The Tyr recombinase domain maps to 169-354 (KFLDYVENEY…VNDEQKNALD (186 aa)). Residues Arg-210, Lys-234, His-306, Arg-309, and His-332 contribute to the active site. Tyr-341 functions as the O-(3'-phospho-DNA)-tyrosine intermediate in the catalytic mechanism.

The protein belongs to the 'phage' integrase family. XerS subfamily.

The protein resides in the cytoplasm. FtsK is required for recombination. Functionally, site-specific tyrosine recombinase, which acts by catalyzing the cutting and rejoining of the recombining DNA molecules. Essential to convert dimers of the bacterial chromosome into monomers to permit their segregation at cell division. The chain is Tyrosine recombinase XerS from Streptococcus thermophilus (strain ATCC BAA-250 / LMG 18311).